The sequence spans 256 residues: Thiazole synthase (256 aa).

The Schiff-base intermediate with DXP role is filled by Lys95. 1-deoxy-D-xylulose 5-phosphate is bound by residues Gly156, 182–183, and 204–205; these read AG and NT.

The protein belongs to the ThiG family. In terms of assembly, homotetramer. Forms heterodimers with either ThiH or ThiS.

The protein localises to the cytoplasm. The enzyme catalyses [ThiS sulfur-carrier protein]-C-terminal-Gly-aminoethanethioate + 2-iminoacetate + 1-deoxy-D-xylulose 5-phosphate = [ThiS sulfur-carrier protein]-C-terminal Gly-Gly + 2-[(2R,5Z)-2-carboxy-4-methylthiazol-5(2H)-ylidene]ethyl phosphate + 2 H2O + H(+). The protein operates within cofactor biosynthesis; thiamine diphosphate biosynthesis. In terms of biological role, catalyzes the rearrangement of 1-deoxy-D-xylulose 5-phosphate (DXP) to produce the thiazole phosphate moiety of thiamine. Sulfur is provided by the thiocarboxylate moiety of the carrier protein ThiS. In vitro, sulfur can be provided by H(2)S. The chain is Thiazole synthase from Enterobacter sp. (strain 638).